Consider the following 280-residue polypeptide: Acetylglutamate kinase (280 aa).

Residues 64–65 (GG), Arg86, and Asn179 each bind substrate.

The protein belongs to the acetylglutamate kinase family. ArgB subfamily.

The protein resides in the cytoplasm. It catalyses the reaction N-acetyl-L-glutamate + ATP = N-acetyl-L-glutamyl 5-phosphate + ADP. Its pathway is amino-acid biosynthesis; L-arginine biosynthesis; N(2)-acetyl-L-ornithine from L-glutamate: step 2/4. Its function is as follows. Catalyzes the ATP-dependent phosphorylation of N-acetyl-L-glutamate. The sequence is that of Acetylglutamate kinase from Campylobacter fetus subsp. fetus (strain 82-40).